Reading from the N-terminus, the 70-residue chain is Small ribosomal subunit protein bS21 (70 aa).

The protein belongs to the bacterial ribosomal protein bS21 family.

This chain is Small ribosomal subunit protein bS21, found in Bordetella avium (strain 197N).